The chain runs to 361 residues: Phospho-N-acetylmuramoyl-pentapeptide-transferase (361 aa).

The next 11 membrane-spanning stretches (helical) occupy residues 10–30, 40–60, 84–104, 107–127, 147–167, 175–195, 206–226, 232–252, 260–280, 288–308, and 341–361; these read PGTG…ACLI, LSLP…IGVP, GTPT…GSLV, GDPR…IGGI, LLLQ…HGAI, WGWL…VFLA, LDGL…LQLM, GDPA…GFLL, VFMG…IALL, LLMG…VWVF, and VVVS…VLVP.

The protein belongs to the glycosyltransferase 4 family. MraY subfamily. Mg(2+) serves as cofactor.

Its subcellular location is the cell inner membrane. It catalyses the reaction UDP-N-acetyl-alpha-D-muramoyl-L-alanyl-gamma-D-glutamyl-meso-2,6-diaminopimeloyl-D-alanyl-D-alanine + di-trans,octa-cis-undecaprenyl phosphate = di-trans,octa-cis-undecaprenyl diphospho-N-acetyl-alpha-D-muramoyl-L-alanyl-D-glutamyl-meso-2,6-diaminopimeloyl-D-alanyl-D-alanine + UMP. Its pathway is cell wall biogenesis; peptidoglycan biosynthesis. Its function is as follows. Catalyzes the initial step of the lipid cycle reactions in the biosynthesis of the cell wall peptidoglycan: transfers peptidoglycan precursor phospho-MurNAc-pentapeptide from UDP-MurNAc-pentapeptide onto the lipid carrier undecaprenyl phosphate, yielding undecaprenyl-pyrophosphoryl-MurNAc-pentapeptide, known as lipid I. This is Phospho-N-acetylmuramoyl-pentapeptide-transferase from Synechococcus sp. (strain RCC307).